Consider the following 144-residue polypeptide: Large ribosomal subunit protein uL15 (144 aa).

The interval 1-53 (MRLNTLSPAVGAKSAPKRVGRGIGSGLGKTAGRGHKGQKSRSGGGVRPGFEGG) is disordered. Gly residues-rich tracts occupy residues 21 to 31 (RGIGSGLGKTA) and 42 to 52 (SGGGVRPGFEG).

The protein belongs to the universal ribosomal protein uL15 family. In terms of assembly, part of the 50S ribosomal subunit.

Binds to the 23S rRNA. The polypeptide is Large ribosomal subunit protein uL15 (Shewanella amazonensis (strain ATCC BAA-1098 / SB2B)).